Here is a 541-residue protein sequence, read N- to C-terminus: Cytochrome P450 67 (541 aa).

Cys479 lines the heme pocket.

It belongs to the cytochrome P450 family. Requires heme as cofactor.

This Uromyces fabae (Rust fungus) protein is Cytochrome P450 67 (CYP67).